Consider the following 156-residue polypeptide: Small ribosomal subunit protein uS7 (156 aa).

Belongs to the universal ribosomal protein uS7 family. Part of the 30S ribosomal subunit. Contacts proteins S9 and S11.

One of the primary rRNA binding proteins, it binds directly to 16S rRNA where it nucleates assembly of the head domain of the 30S subunit. Is located at the subunit interface close to the decoding center, probably blocks exit of the E-site tRNA. The polypeptide is Small ribosomal subunit protein uS7 (Cupriavidus metallidurans (strain ATCC 43123 / DSM 2839 / NBRC 102507 / CH34) (Ralstonia metallidurans)).